Consider the following 129-residue polypeptide: Small ribosomal subunit protein uS11 (129 aa).

It belongs to the universal ribosomal protein uS11 family. Part of the 30S ribosomal subunit. Interacts with proteins S7 and S18. Binds to IF-3.

Functionally, located on the platform of the 30S subunit, it bridges several disparate RNA helices of the 16S rRNA. Forms part of the Shine-Dalgarno cleft in the 70S ribosome. This Brucella abortus (strain S19) protein is Small ribosomal subunit protein uS11.